The chain runs to 299 residues: Oxygen-dependent coproporphyrinogen-III oxidase (299 aa).

Ser92 is a substrate binding site. Residues His96 and His106 each coordinate a divalent metal cation. Residue His106 is the Proton donor of the active site. Substrate is bound at residue 108 to 110 (NVR). Positions 145 and 175 each coordinate a divalent metal cation. Positions 240–275 (YVEFNLVWDRGTLFGLQTGGRTESILMSMPPLVRWE) are important for dimerization. 258–260 (GGR) contributes to the substrate binding site.

This sequence belongs to the aerobic coproporphyrinogen-III oxidase family. As to quaternary structure, homodimer. A divalent metal cation serves as cofactor.

It is found in the cytoplasm. The catalysed reaction is coproporphyrinogen III + O2 + 2 H(+) = protoporphyrinogen IX + 2 CO2 + 2 H2O. Its pathway is porphyrin-containing compound metabolism; protoporphyrin-IX biosynthesis; protoporphyrinogen-IX from coproporphyrinogen-III (O2 route): step 1/1. Involved in the heme biosynthesis. Catalyzes the aerobic oxidative decarboxylation of propionate groups of rings A and B of coproporphyrinogen-III to yield the vinyl groups in protoporphyrinogen-IX. This Citrobacter koseri (strain ATCC BAA-895 / CDC 4225-83 / SGSC4696) protein is Oxygen-dependent coproporphyrinogen-III oxidase.